A 453-amino-acid polypeptide reads, in one-letter code: Indoleamine 2,3-dioxygenase (453 aa).

Heme is bound at residue His-331.

Belongs to the indoleamine 2,3-dioxygenase family. It depends on heme as a cofactor.

It carries out the reaction D-tryptophan + O2 = N-formyl-D-kynurenine. The enzyme catalyses L-tryptophan + O2 = N-formyl-L-kynurenine. It functions in the pathway cofactor biosynthesis; NAD(+) biosynthesis. Catalyzes the first step in tryptophan catabolism in order to supply de novo nicotinamide adenine dinucleotide (NAD(+)) via the kynurenine pathway. Plays a role in the cellular response to telomere uncapping. This chain is Indoleamine 2,3-dioxygenase (BNA2), found in Saccharomyces cerevisiae (strain ATCC 204508 / S288c) (Baker's yeast).